Reading from the N-terminus, the 310-residue chain is HPr kinase/phosphorylase (310 aa).

Residues His-138 and Lys-159 contribute to the active site. Position 153–160 (153–160) interacts with ATP; that stretch reads GASGIGKS. Mg(2+) is bound at residue Ser-160. The Proton acceptor; for phosphorylation activity. Proton donor; for dephosphorylation activity role is filled by Asp-177. Residues 201-210 form an important for the catalytic mechanism of both phosphorylation and dephosphorylation region; it reads IEIRGVGIID. Glu-202 lines the Mg(2+) pocket. Arg-243 is a catalytic residue. The tract at residues 264 to 269 is important for the catalytic mechanism of dephosphorylation; the sequence is PVKTGR.

Belongs to the HPrK/P family. In terms of assembly, homohexamer. Mg(2+) is required as a cofactor.

It carries out the reaction [HPr protein]-L-serine + ATP = [HPr protein]-O-phospho-L-serine + ADP + H(+). The catalysed reaction is [HPr protein]-O-phospho-L-serine + phosphate + H(+) = [HPr protein]-L-serine + diphosphate. In terms of biological role, catalyzes the ATP- as well as the pyrophosphate-dependent phosphorylation of a specific serine residue in HPr, a phosphocarrier protein of the phosphoenolpyruvate-dependent sugar phosphotransferase system (PTS). HprK/P also catalyzes the pyrophosphate-producing, inorganic phosphate-dependent dephosphorylation (phosphorolysis) of seryl-phosphorylated HPr (P-Ser-HPr). The two antagonistic activities of HprK/P are regulated by several intracellular metabolites, which change their concentration in response to the absence or presence of rapidly metabolisable carbon sources (glucose, fructose, etc.) in the growth medium. Therefore, by controlling the phosphorylation state of HPr, HPrK/P is a sensor enzyme that plays a major role in the regulation of carbon metabolism and sugar transport: it mediates carbon catabolite repression (CCR), and regulates PTS-catalyzed carbohydrate uptake and inducer exclusion. The sequence is that of HPr kinase/phosphorylase from Lactococcus lactis subsp. cremoris (strain SK11).